A 123-amino-acid polypeptide reads, in one-letter code: Putative membrane protein insertion efficiency factor (123 aa).

Residues 1-23 are disordered; it reads MGSCGGKHTGKGAPKPYSRNFTD.

Belongs to the UPF0161 family.

Its subcellular location is the cell inner membrane. Its function is as follows. Could be involved in insertion of integral membrane proteins into the membrane. The polypeptide is Putative membrane protein insertion efficiency factor (Brucella ovis (strain ATCC 25840 / 63/290 / NCTC 10512)).